A 980-amino-acid chain; its full sequence is Ovochymase-2 (980 aa).

The N-terminal stretch at methionine 1–glycine 21 is a signal peptide. A propeptide spans alanine 22 to arginine 49 (activation peptide). Asparagine 39 carries an N-linked (GlcNAc...) asparagine glycan. One can recognise a Peptidase S1 1 domain in the interval isoleucine 50–asparagine 299. Cysteine 75 and cysteine 91 are disulfide-bonded. The active-site Charge relay system is histidine 90. Valine 112 and glutamate 117 together coordinate Ca(2+). Aspartate 140 acts as the Charge relay system in catalysis. Cystine bridges form between cysteine 174/cysteine 244, cysteine 205/cysteine 223, cysteine 234/cysteine 263, cysteine 312/cysteine 342, cysteine 369/cysteine 388, cysteine 435/cysteine 462, cysteine 489/cysteine 510, cysteine 618/cysteine 634, cysteine 716/cysteine 779, cysteine 744/cysteine 757, and cysteine 769/cysteine 798. Catalysis depends on serine 238, which acts as the Charge relay system. 2 consecutive CUB domains span residues cysteine 312–valine 425 and cysteine 435–valine 547. One can recognise a Peptidase S1 2 domain in the interval isoleucine 593 to leucine 822. Positions isoleucine 593–asparagine 980 are cleaved as a propeptide — activation peptide. Residue asparagine 766 is glycosylated (N-linked (GlcNAc...) asparagine). Positions histidine 835–serine 863 are disordered. 2 N-linked (GlcNAc...) asparagine glycosylation sites follow: asparagine 858 and asparagine 932.

It belongs to the peptidase S1 family. Post-translationally, the catalytically inactive 108 kDa form is processed both N- and C-terminally to give rise to catalytically active and inactive forms. As to expression, differentially expressed in the oviductal pars recta (PR) region.

It is found in the secreted. The enzyme catalyses Preferential cleavage at 371-Gly-Ser-Arg-|-Trp-374 of glycoprotein gp43 in Xenopus laevis coelemic egg envelope to yield gp41.. Mediates gamete interaction by affecting the vitelline coat. In Rhinella arenarum (Argentine common toad), this protein is Ovochymase-2 (OVCH2).